A 217-amino-acid chain; its full sequence is Snake venom metalloproteinase lebetase-4 (217 aa).

Residues 1–14 constitute a propeptide that is removed on maturation; that stretch reads SCRKKASQLNLTPE. Glutamine 15 is modified (pyrrolidone carboxylic acid). The 197-residue stretch at 21–217 folds into the Peptidase M12B domain; the sequence is RYIELVIVAD…HNPQCILNQP (197 aa). The Ca(2+) site is built by glutamate 24 and aspartate 108. 3 disulfide bridges follow: cysteine 132–cysteine 212, cysteine 172–cysteine 196, and cysteine 174–cysteine 179. A Zn(2+)-binding site is contributed by histidine 157. Glutamate 158 is a catalytic residue. Zn(2+) is bound by residues histidine 161 and histidine 167. Ca(2+) is bound by residues cysteine 212 and asparagine 215.

It belongs to the venom metalloproteinase (M12B) family. P-I subfamily. In terms of assembly, monomer. Zn(2+) is required as a cofactor. Expressed by the venom gland.

The protein localises to the secreted. Fibrinolytic and caseinolytic activities are inhibited by Cd(2+), Cu(2+) and Co(2+) ions. Not inhibited by Mg(2+), Ca(2+) and Ba(2+). Also inhibited by EDTA, EGTA and 1,10-phenanthroline. Functionally, snake venom zinc metalloprotease that hydrolyzes the Aalpha-chain and more slowly the Bbeta-chain of fibrin and fibrinogen. Also hydrolyzes casein and B-chain of oxidized insulin. Its fibrinolytic activity is direct, without any plasminogen activation. Inhibits ADP-induced and collagen-induced platelet aggregation. Shows low hemorrhagic activity. Cleaves the plasma proteinase inhibitors alpha(2)-macroglobulin (A2M) and alpha(2)M-related pregnancy zone protein (PZP), and is inhibited by them. The chain is Snake venom metalloproteinase lebetase-4 from Macrovipera lebetinus (Levantine viper).